The sequence spans 112 residues: T cell receptor alpha variable 41 (112 aa).

Residues 1–21 form the signal peptide; it reads MVKIRQFLLAILWLQLSCVSA. Residues 24-112 form the Ig-like domain; sequence NEVEQSPQNL…DSAVYICAVR (89 aa). Asn32 and Asn44 each carry an N-linked (GlcNAc...) asparagine glycan. Cysteines 45 and 109 form a disulfide.

As to quaternary structure, alpha-beta TR is a heterodimer composed of an alpha and beta chain; disulfide-linked. The alpha-beta TR is associated with the transmembrane signaling CD3 coreceptor proteins to form the TR-CD3 (TcR or TCR). The assembly of alpha-beta TR heterodimers with CD3 occurs in the endoplasmic reticulum where a single alpha-beta TR heterodimer associates with one CD3D-CD3E heterodimer, one CD3G-CD3E heterodimer and one CD247 homodimer forming a stable octameric structure. CD3D-CD3E and CD3G-CD3E heterodimers preferentially associate with TR alpha and TR beta chains, respectively. The association of the CD247 homodimer is the last step of TcR assembly in the endoplasmic reticulum and is required for transport to the cell surface.

Its subcellular location is the cell membrane. In terms of biological role, v region of the variable domain of T cell receptor (TR) alpha chain that participates in the antigen recognition. Alpha-beta T cell receptors are antigen specific receptors which are essential to the immune response and are present on the cell surface of T lymphocytes. Recognize peptide-major histocompatibility (MH) (pMH) complexes that are displayed by antigen presenting cells (APC), a prerequisite for efficient T cell adaptive immunity against pathogens. Binding of alpha-beta TR to pMH complex initiates TR-CD3 clustering on the cell surface and intracellular activation of LCK that phosphorylates the ITAM motifs of CD3G, CD3D, CD3E and CD247 enabling the recruitment of ZAP70. In turn ZAP70 phosphorylates LAT, which recruits numerous signaling molecules to form the LAT signalosome. The LAT signalosome propagates signal branching to three major signaling pathways, the calcium, the mitogen-activated protein kinase (MAPK) kinase and the nuclear factor NF-kappa-B (NF-kB) pathways, leading to the mobilization of transcription factors that are critical for gene expression and essential for T cell growth and differentiation. The T cell repertoire is generated in the thymus, by V-(D)-J rearrangement. This repertoire is then shaped by intrathymic selection events to generate a peripheral T cell pool of self-MH restricted, non-autoaggressive T cells. Post-thymic interaction of alpha-beta TR with the pMH complexes shapes TR structural and functional avidity. The protein is T cell receptor alpha variable 41 of Homo sapiens (Human).